The primary structure comprises 398 residues: Ribosomal RNA large subunit methyltransferase I (398 aa).

The PUA domain occupies 2–79 (SVRLVLAKGR…LSESIDIAFF (78 aa)).

The protein belongs to the methyltransferase superfamily. RlmI family.

The protein resides in the cytoplasm. The enzyme catalyses cytidine(1962) in 23S rRNA + S-adenosyl-L-methionine = 5-methylcytidine(1962) in 23S rRNA + S-adenosyl-L-homocysteine + H(+). Specifically methylates the cytosine at position 1962 (m5C1962) of 23S rRNA. The sequence is that of Ribosomal RNA large subunit methyltransferase I from Shigella dysenteriae serotype 1 (strain Sd197).